We begin with the raw amino-acid sequence, 102 residues long: Small ribosomal subunit protein uS10 (102 aa).

The protein belongs to the universal ribosomal protein uS10 family. As to quaternary structure, part of the 30S ribosomal subunit.

Functionally, involved in the binding of tRNA to the ribosomes. The sequence is that of Small ribosomal subunit protein uS10 from Clostridium acetobutylicum (strain ATCC 824 / DSM 792 / JCM 1419 / IAM 19013 / LMG 5710 / NBRC 13948 / NRRL B-527 / VKM B-1787 / 2291 / W).